Reading from the N-terminus, the 429-residue chain is Homocysteine synthase (429 aa).

Lys-210 carries the post-translational modification N6-(pyridoxal phosphate)lysine.

The protein belongs to the trans-sulfuration enzymes family. In terms of assembly, homotetramer. Pyridoxal 5'-phosphate is required as a cofactor.

It is found in the cytoplasm. It localises to the nucleus. The enzyme catalyses O-acetyl-L-homoserine + methanethiol = L-methionine + acetate + H(+). It catalyses the reaction O-acetyl-L-homoserine + hydrogen sulfide = L-homocysteine + acetate. It participates in amino-acid biosynthesis; L-methionine biosynthesis via de novo pathway; L-homocysteine from O-acetyl-L-homoserine. Catalyzes the conversion of O-acetyl-L-homoserine (OAH) into homocysteine in the methionine biosynthesis pathway. Can also use O-succinyl-L-homoserine and L-homoserine as substrates. Also has cysteine synthase (O-acetylserine sulfhydrylase) activity in vitro, but in S.pombe, it seems only to be involved in the alternative pathway of methionine biosynthesis under cysteine deficiency conditions. The sequence is that of Homocysteine synthase from Schizosaccharomyces pombe (strain 972 / ATCC 24843) (Fission yeast).